We begin with the raw amino-acid sequence, 473 residues long: H(+)/Cl(-) exchange transporter ClcA (473 aa).

Topologically, residues Met1–Pro32 are cytoplasmic. Residues Leu33 to Val69 traverse the membrane as a helical segment. Over His70–Pro76 the chain is Periplasmic. The helical transmembrane segment at Leu77–Tyr100 threads the bilayer. The Selectivity filter part_1 signature appears at Gly106–Pro110. Ser107 contributes to the chloride binding site. Residues Ile109–Leu116 constitute an intramembrane region (helical). The Cytoplasmic portion of the chain corresponds to Glu117–Arg123. Helical transmembrane passes span Trp124 to Gly141 and Glu148 to Phe166. Residues Gly146–Pro150 carry the Selectivity filter part_2 motif. Over Arg167–Thr176 the chain is Cytoplasmic. 2 consecutive intramembrane regions (helical) follow at residues Leu177–Ala189 and Pro193–Ile201. At Glu202–Ser214 the chain is on the cytoplasmic side. Residues Ile215–Phe232 form a helical membrane-spanning segment. Topologically, residues Asn233–Leu252 are periplasmic. Residues Trp253–His281 traverse the membrane as a helical segment. The Cytoplasmic segment spans residues Arg282–Asn287. A helical membrane pass occupies residues Ile288–Ala309. Residues Pro310 to Ser329 are Periplasmic-facing. A run of 2 helical transmembrane segments spans residues Met330–Ser349 and Gly355–Val376. A Selectivity filter part_3 motif is present at residues Gly355–Pro359. Chloride-binding residues include Ile356 and Phe357. Over Glu377–Ala386 the chain is Periplasmic. The segment at residues Gly387–Ser401 is an intramembrane region (helical). Residues Ile402–Ala404 constitute an intramembrane region (note=Loop between two helices). An intramembrane region (helical) is located at residues Pro405 to Thr416. Residues Asp417 to Leu421 constitute an intramembrane region (note=Loop between two helices). Residues Ile422–Phe438 traverse the membrane as a helical segment. Over Thr439–Thr473 the chain is Cytoplasmic. Residue Tyr445 participates in chloride binding.

Belongs to the chloride channel (TC 2.A.49) family. ClcA subfamily. In terms of assembly, homodimer.

It is found in the cell inner membrane. The enzyme catalyses 2 chloride(in) + H(+)(out) = 2 chloride(out) + H(+)(in). In terms of biological role, proton-coupled chloride transporter. Functions as antiport system and exchanges two chloride ions for 1 proton. Probably acts as an electrical shunt for an outwardly-directed proton pump that is linked to amino acid decarboxylation, as part of the extreme acid resistance (XAR) response. The sequence is that of H(+)/Cl(-) exchange transporter ClcA from Escherichia coli O139:H28 (strain E24377A / ETEC).